Reading from the N-terminus, the 171-residue chain is Antimicrobial protein CAP18 (171 aa).

An N-terminal signal peptide occupies residues 1-29 (METHKHGPSLAWWSLLLLLLGLLMPPAIA). Intrachain disulfides connect Cys-85/Cys-96 and Cys-107/Cys-124.

This sequence belongs to the cathelicidin family. Neutrophils.

The protein resides in the secreted. Functionally, CAP18 binds to the lipid A moiety of bacterial lipopolysaccharides (LPS), a glycolipid present in the outer membrane of all Gram-negative bacteria. Has antibiotic activity. The protein is Antimicrobial protein CAP18 (CAP18) of Oryctolagus cuniculus (Rabbit).